Consider the following 209-residue polypeptide: Large ribosomal subunit protein uL3 (209 aa).

Gln-150 is modified (N5-methylglutamine).

Belongs to the universal ribosomal protein uL3 family. As to quaternary structure, part of the 50S ribosomal subunit. Forms a cluster with proteins L14 and L19. In terms of processing, methylated by PrmB.

One of the primary rRNA binding proteins, it binds directly near the 3'-end of the 23S rRNA, where it nucleates assembly of the 50S subunit. The polypeptide is Large ribosomal subunit protein uL3 (Vibrio vulnificus (strain YJ016)).